Here is a 536-residue protein sequence, read N- to C-terminus: CTP synthase (536 aa).

An amidoligase domain region spans residues 1 to 267 (MTKFIFVTGG…DDIVIKRLEL (267 aa)). Ser-13 contacts CTP. Position 13 (Ser-13) interacts with UTP. Residue 14–19 (SLGKGI) participates in ATP binding. Tyr-54 lines the L-glutamine pocket. ATP is bound at residue Asp-71. Residues Asp-71 and Glu-141 each contribute to the Mg(2+) site. CTP contacts are provided by residues 148–150 (DIE), 188–193 (KTKPTQ), and Lys-224. Residues 188–193 (KTKPTQ) and Lys-224 each bind UTP. An ATP-binding site is contributed by 240-242 (RDA). Residues 293-535 (TIGLVGKYVS…IEASLNHQQS (243 aa)) form the Glutamine amidotransferase type-1 domain. Gly-355 is an L-glutamine binding site. The active-site Nucleophile; for glutamine hydrolysis is Cys-382. L-glutamine is bound by residues 383–386 (LGMQ), Glu-406, and Arg-463. Active-site residues include His-508 and Glu-510.

This sequence belongs to the CTP synthase family. In terms of assembly, homotetramer.

It carries out the reaction UTP + L-glutamine + ATP + H2O = CTP + L-glutamate + ADP + phosphate + 2 H(+). The catalysed reaction is L-glutamine + H2O = L-glutamate + NH4(+). It catalyses the reaction UTP + NH4(+) + ATP = CTP + ADP + phosphate + 2 H(+). Its pathway is pyrimidine metabolism; CTP biosynthesis via de novo pathway; CTP from UDP: step 2/2. With respect to regulation, allosterically activated by GTP, when glutamine is the substrate; GTP has no effect on the reaction when ammonia is the substrate. The allosteric effector GTP functions by stabilizing the protein conformation that binds the tetrahedral intermediate(s) formed during glutamine hydrolysis. Inhibited by the product CTP, via allosteric rather than competitive inhibition. In terms of biological role, catalyzes the ATP-dependent amination of UTP to CTP with either L-glutamine or ammonia as the source of nitrogen. Regulates intracellular CTP levels through interactions with the four ribonucleotide triphosphates. The sequence is that of CTP synthase from Staphylococcus saprophyticus subsp. saprophyticus (strain ATCC 15305 / DSM 20229 / NCIMB 8711 / NCTC 7292 / S-41).